The sequence spans 1906 residues: Retinoic acid-induced protein 1 (1906 aa).

Disordered stretches follow at residues methionine 1–glutamine 261, arginine 273–alanine 299, tyrosine 335–phenylalanine 370, valine 469–glycine 520, serine 538–serine 571, and serine 656–proline 712. A compositionally biased stretch (polar residues) spans lysine 13–threonine 24. Over residues proline 66–alanine 75 the composition is skewed to low complexity. Residues proline 124–leucine 134 are compositionally biased toward pro residues. The span at serine 213–valine 226 shows a compositional bias: low complexity. Polar residues predominate over residues threonine 252 to glutamine 261. Low complexity-rich tracts occupy residues glutamine 278–glutamine 291 and serine 339–serine 353. 2 positions are modified to phosphoserine: serine 339 and serine 345. Threonine 472 carries the post-translational modification Phosphothreonine. A compositionally biased stretch (polar residues) spans arginine 541–aspartate 563. Phosphoserine occurs at positions 568 and 683. At threonine 696 the chain carries Phosphothreonine. Serine 805 carries the post-translational modification Phosphoserine. A Glycyl lysine isopeptide (Lys-Gly) (interchain with G-Cter in SUMO2) cross-link involves residue lysine 811. Lysine 819 is covalently cross-linked (Glycyl lysine isopeptide (Lys-Gly) (interchain with G-Cter in SUMO1)). Phosphoserine is present on residues serine 880 and serine 892. A Glycyl lysine isopeptide (Lys-Gly) (interchain with G-Cter in SUMO1); alternate cross-link involves residue lysine 901. Residue lysine 901 forms a Glycyl lysine isopeptide (Lys-Gly) (interchain with G-Cter in SUMO2); alternate linkage. The span at lysine 937–serine 947 shows a compositional bias: polar residues. Disordered regions lie at residues lysine 937–aspartate 1299, phenylalanine 1344–proline 1570, valine 1613–serine 1637, alanine 1746–glycine 1775, and glutamate 1794–alanine 1819. The segment covering lysine 950–proline 962 has biased composition (basic and acidic residues). Basic residues predominate over residues lysine 996–arginine 1005. Residue serine 1064 is modified to Phosphoserine. Position 1068 is a phosphothreonine (threonine 1068). Residues proline 1101–serine 1119 show a composition bias toward low complexity. The residue at position 1122 (serine 1122) is a Phosphoserine. Short sequence motifs (nuclear localization signal) lie at residues arginine 1160–leucine 1177 and lysine 1223–valine 1240. The segment covering arginine 1242–serine 1252 has biased composition (low complexity). Phosphoserine occurs at positions 1352, 1358, and 1374. A Glycyl lysine isopeptide (Lys-Gly) (interchain with G-Cter in SUMO2) cross-link involves residue lysine 1425. Serine 1431 bears the Phosphoserine mark. Residues proline 1444–alanine 1453 are compositionally biased toward basic residues. Composition is skewed to polar residues over residues serine 1482–asparagine 1491 and glutamine 1517–tyrosine 1534. Residues serine 1535–alanine 1545 show a composition bias toward basic residues. Residues serine 1628 to serine 1637 show a composition bias toward low complexity. The C2HC pre-PHD-type zinc finger occupies leucine 1780–valine 1835. The segment covering proline 1798–proline 1812 has biased composition (basic and acidic residues). The PHD-type zinc-finger motif lies at methionine 1855–lysine 1903.

As to expression, expressed in all tissues examined with higher expression in the heart and brain. No expression was seen in the corpus callosum of the brain.

The protein localises to the cytoplasm. It is found in the nucleus. Its function is as follows. Transcriptional regulator of the circadian clock components: CLOCK, BMAL1, BMAL2, PER1/3, CRY1/2, NR1D1/2 and RORA/C. Positively regulates the transcriptional activity of CLOCK a core component of the circadian clock. Regulates transcription through chromatin remodeling by interacting with other proteins in chromatin as well as proteins in the basic transcriptional machinery. May be important for embryonic and postnatal development. May be involved in neuronal differentiation. The polypeptide is Retinoic acid-induced protein 1 (RAI1) (Homo sapiens (Human)).